Reading from the N-terminus, the 479-residue chain is Solute carrier family 7 member 13 (479 aa).

Residues 1–14 (MAMDIEKKIYLKRQ) lie on the Cytoplasmic side of the membrane. Residues 15–35 (LGYFWGTNFLIINIIGAGIFV) traverse the membrane as a helical segment. Topologically, residues 36 to 47 (SPKGVLQYSSMN) are extracellular. The chain crosses the membrane as a helical span at residues 48–68 (VGVSLCVWVFCAVLSMTSTLC). Residues 69 to 89 (AAEIGITFPYTVAHYYFLKRC) are Cytoplasmic-facing. Residues 90–110 (FGPFVAFLRLWTSLFTGPGVL) form a helical membrane-spanning segment. The Extracellular portion of the chain corresponds to 111-129 (ASQALLLAEYGIQPFYPSC). A helical transmembrane segment spans residues 130–150 (SAPAVPKKCLALAMLWIVGIL). Residues 151–165 (NSRGVKELSWLQTVS) lie on the Cytoplasmic side of the membrane. A helical membrane pass occupies residues 166–186 (MVLKMGILSFISLSGLFLLVT). Topologically, residues 187-208 (GRKENVRRLQNAFDAEFPEVSR) are extracellular. The chain crosses the membrane as a helical span at residues 209 to 229 (LIEAIFQGYFAFSGGGSFTYV). Residues 230–242 (AGELKEPSKTIPR) are Cytoplasmic-facing. Residues 243 to 263 (CIFTALPLVTVVYLLANLSYL) form a helical membrane-spanning segment. At 264–289 (TVLSPQELLSSDAVALTWTDRVIPQL) the chain is on the extracellular side. The helical transmembrane segment at 290 to 310 (TWSVPFAISASLFSNLVTSVF) threads the bilayer. At 311–338 (ETSRTSYIASRNGQLPLLCSTLNVHSSP) the chain is on the cytoplasmic side. Residues 339 to 359 (FIAVLLDVSMGSIAIVLTNLI) form a helical membrane-spanning segment. Residue Glu360 is a topological domain, extracellular. Residues 361-381 (LINYLFFVFSIWTVLSVIGIL) form a helical membrane-spanning segment. Topologically, residues 382–396 (KLRYQEPNLHRPYKV) are cytoplasmic. The helical transmembrane segment at 397-417 (FSPFLFITAAISLSMVLIPLI) threads the bilayer. Topologically, residues 418 to 423 (KSPKMQ) are extracellular. Residues 424–444 (YIYVFLFFLGGLLFYVPLIHF) form a helical membrane-spanning segment. Residues 445 to 479 (KLKLIWFQKLTCYLQLLFNICIPDVSDEHVAEEES) are Cytoplasmic-facing.

The protein belongs to the amino acid-polyamine-organocation (APC) superfamily. As to quaternary structure, disulfide-linked heterodimer composed of the catalytic light subunit SLC7A13 and the heavy subunit SLC3A1.

It localises to the apical cell membrane. It catalyses the reaction L-cystine(out) + L-aspartate(in) = L-cystine(in) + L-aspartate(out). The enzyme catalyses L-cystine(out) = L-cystine(in). The catalysed reaction is L-aspartate(in) + L-glutamate(out) = L-aspartate(out) + L-glutamate(in). It carries out the reaction L-aspartate(in) + L-glutamine(out) = L-aspartate(out) + L-glutamine(in). It catalyses the reaction L-aspartate(in) + L-methionine(out) = L-aspartate(out) + L-methionine(in). The enzyme catalyses L-leucine(out) + L-aspartate(in) = L-leucine(in) + L-aspartate(out). The catalysed reaction is L-valine(out) + L-aspartate(in) = L-valine(in) + L-aspartate(out). It carries out the reaction L-aspartate(in) + L-phenylalanine(out) = L-aspartate(out) + L-phenylalanine(in). It catalyses the reaction L-tyrosine(out) + L-aspartate(in) = L-tyrosine(in) + L-aspartate(out). The enzyme catalyses L-tryptophan(out) + L-aspartate(in) = L-tryptophan(in) + L-aspartate(out). In terms of biological role, associates with SLC3A1/rBAT to form a functional heterodimeric complex that transports anionic and neutral amino acids across the apical plasma membrane of renal epithelium. Preferentially mediates exchange transport, but can also operate via facilitated diffusion. May act as a major transporter for L-cystine in late proximal tubules, ensuring its reabsorption from the luminal fluid in exchange for cytosolic L-glutamate or L-aspartate. The polypeptide is Solute carrier family 7 member 13 (Slc7a13) (Rattus norvegicus (Rat)).